Reading from the N-terminus, the 366-residue chain is Phospho-N-acetylmuramoyl-pentapeptide-transferase (366 aa).

A run of 10 helical transmembrane segments spans residues 27-47 (AALF…ISSL), 71-91 (TPTM…LLWA), 93-113 (LSSI…AIGF), 134-154 (LGIE…AAQS), 174-194 (LMLN…VGAG), 205-225 (GLAI…AYLA), 245-265 (LAVI…FNAP), 268-288 (AIFM…TVAV), 297-317 (VIIG…VFWF), and 343-363 (QVVI…LSTL).

The protein belongs to the glycosyltransferase 4 family. MraY subfamily. Requires Mg(2+) as cofactor.

Its subcellular location is the cell inner membrane. The enzyme catalyses UDP-N-acetyl-alpha-D-muramoyl-L-alanyl-gamma-D-glutamyl-meso-2,6-diaminopimeloyl-D-alanyl-D-alanine + di-trans,octa-cis-undecaprenyl phosphate = di-trans,octa-cis-undecaprenyl diphospho-N-acetyl-alpha-D-muramoyl-L-alanyl-D-glutamyl-meso-2,6-diaminopimeloyl-D-alanyl-D-alanine + UMP. It functions in the pathway cell wall biogenesis; peptidoglycan biosynthesis. Catalyzes the initial step of the lipid cycle reactions in the biosynthesis of the cell wall peptidoglycan: transfers peptidoglycan precursor phospho-MurNAc-pentapeptide from UDP-MurNAc-pentapeptide onto the lipid carrier undecaprenyl phosphate, yielding undecaprenyl-pyrophosphoryl-MurNAc-pentapeptide, known as lipid I. The sequence is that of Phospho-N-acetylmuramoyl-pentapeptide-transferase from Sinorhizobium fredii (strain NBRC 101917 / NGR234).